We begin with the raw amino-acid sequence, 165 residues long: Lipoprotein signal peptidase (165 aa).

A run of 4 helical transmembrane segments spans residues 7-27, 28-48, 61-81, and 87-107; these read FFLL…KYWI, THTM…LYHV, FSHW…FWLW, and DKAL…GNLI. Active-site residues include Asp-117 and Asp-136. A helical transmembrane segment spans residues 128-148; it reads SFAIFNLADTFITLGAISILI.

Belongs to the peptidase A8 family.

It localises to the cell inner membrane. The catalysed reaction is Release of signal peptides from bacterial membrane prolipoproteins. Hydrolyzes -Xaa-Yaa-Zaa-|-(S,diacylglyceryl)Cys-, in which Xaa is hydrophobic (preferably Leu), and Yaa (Ala or Ser) and Zaa (Gly or Ala) have small, neutral side chains.. Its pathway is protein modification; lipoprotein biosynthesis (signal peptide cleavage). Its function is as follows. This protein specifically catalyzes the removal of signal peptides from prolipoproteins. The sequence is that of Lipoprotein signal peptidase from Bartonella bacilliformis (strain ATCC 35685 / KC583 / Herrer 020/F12,63).